Reading from the N-terminus, the 152-residue chain is UPF0225 protein KPK_2103 (152 aa).

Belongs to the UPF0225 family.

This is UPF0225 protein KPK_2103 from Klebsiella pneumoniae (strain 342).